Here is a 532-residue protein sequence, read N- to C-terminus: Protein kinase domain-containing protein ppk9 (532 aa).

The 252-residue stretch at 23–274 folds into the Protein kinase domain; that stretch reads WLLGRTLGQG…VAEIMQHPWF (252 aa). Residues 29 to 37 and K52 contribute to the ATP site; that span reads LGQGNLAKV. D145 functions as the Proton acceptor in the catalytic mechanism. Over residues 316 to 346 the composition is skewed to polar residues; sequence PSSSVGQIPQPTDHSALSPSKPMSISGTESP. The disordered stretch occupies residues 316 to 349; it reads PSSSVGQIPQPTDHSALSPSKPMSISGTESPNPD.

The protein resides in the cytoplasm. Its subcellular location is the nucleus. It is found in the cytoskeleton. It localises to the microtubule organizing center. The protein localises to the spindle pole body. The protein is Protein kinase domain-containing protein ppk9 (ppk9) of Schizosaccharomyces pombe (strain 972 / ATCC 24843) (Fission yeast).